The following is a 522-amino-acid chain: Signal transduction histidine-protein kinase/phosphatase MprB (522 aa).

Residues 1-30 are Cytoplasmic-facing; the sequence is MIRLHRPQRPPLRAPLRATPSLSLRWRVML. The chain crosses the membrane as a helical span at residues 31–51; it reads LAMSMVAMVVVLMAFAVYAVI. At 52 to 167 the chain is on the extracellular side; the sequence is SAALYSDIDN…PTEAVMNKLR (116 aa). A helical transmembrane segment spans residues 168–188; it reads WVLLIVGGVGVAVAAVAGGMV. Over 189–522 the chain is Cytoplasmic; the sequence is TRAGLRPVAR…SVDSQSARAR (334 aa). One can recognise an HAMP domain in the interval 190 to 242; it reads RAGLRPVARLTEAAERVARTDDLRPIPVFGSDELARLTESFNLMLRALAESRE. One can recognise a Histidine kinase domain in the interval 250–470; that stretch reads DAGHELRTPL…SFYVLLPGRP (221 aa). Histidine 253 carries the post-translational modification Phosphohistidine; by autocatalysis. The tract at residues 468-522 is disordered; the sequence is GRPLPPAGHSTPAGESETDKAEAATDPAVPVAGDTANSRESANVISVDSQSARAR. Polar residues predominate over residues 502–522; sequence TANSRESANVISVDSQSARAR.

The cofactor is Mg(2+). Mn(2+) is required as a cofactor. In terms of processing, autophosphorylated.

It is found in the cell membrane. It catalyses the reaction ATP + protein L-histidine = ADP + protein N-phospho-L-histidine.. Functionally, member of the two-component regulatory system MprB/MprA which contributes to maintaining a balance among several systems involved in stress resistance and is required for establishment and maintenance of persistent infection in the host. In response to environmental signals MprB acts both as a membrane-associated protein kinase that undergoes autophosphorylation and subsequently transfers the phosphate to MprA, and a protein phosphatase that dephosphorylates phospho-MprA. In Mycobacterium avium (strain 104), this protein is Signal transduction histidine-protein kinase/phosphatase MprB (mprB).